The following is a 253-amino-acid chain: MSLPATFDLTPEDAQLLLAANVHLGSKNVQVHQEPYLYKTRPDGVNIIHIGKTWEKIVLAARIIAAIPNAEDVVAISSRTYGQRAVLKFSAHTGATAIAGRFTPGSFTNYITRSFKEPRLVIVTDPRSDAQAIKEASYVNIPVIALTDLESPSEYVDVAIPCNNRGKHSIGLIWYLLAREVLRLRGALVDRTQPWSIMPDLYFYRDPEEIEQQAAEEAAAGEEDDEAKEEVAAEEQTEAADWAEGQSEEVASW.

Ser2 is subject to N-acetylserine. The tract at residues 212–253 (QQAAEEAAAGEEDDEAKEEVAAEEQTEAADWAEGQSEEVASW) is disordered. A compositionally biased stretch (acidic residues) spans 219 to 238 (AAGEEDDEAKEEVAAEEQTE).

It belongs to the universal ribosomal protein uS2 family. As to quaternary structure, component of the small ribosomal subunit. Mature ribosomes consist of a small (40S) and a large (60S) subunit. The 40S subunit contains about 33 different proteins and 1 molecule of RNA (18S). The 60S subunit contains about 49 different proteins and 3 molecules of RNA (25S, 5.8S and 5S). Interacts with RPS21.

Its subcellular location is the cytoplasm. Its function is as follows. Required for the assembly and/or stability of the 40S ribosomal subunit. Required for the processing of the 20S rRNA-precursor to mature 18S rRNA in a late step of the maturation of 40S ribosomal subunits. The polypeptide is Small ribosomal subunit protein uS2 (Eremothecium gossypii (strain ATCC 10895 / CBS 109.51 / FGSC 9923 / NRRL Y-1056) (Yeast)).